Reading from the N-terminus, the 90-residue chain is Small ribosomal subunit protein bS20 (90 aa).

Belongs to the bacterial ribosomal protein bS20 family.

Functionally, binds directly to 16S ribosomal RNA. The chain is Small ribosomal subunit protein bS20 from Francisella tularensis subsp. holarctica (strain FTNF002-00 / FTA).